The primary structure comprises 254 residues: Probable triosephosphate isomerase 2 (254 aa).

9-11 (NMK) lines the substrate pocket. Catalysis depends on H96, which acts as the Electrophile. Catalysis depends on E168, which acts as the Proton acceptor. Substrate is bound by residues G174 and S212.

It belongs to the triosephosphate isomerase family. As to quaternary structure, homodimer.

It is found in the cytoplasm. It catalyses the reaction D-glyceraldehyde 3-phosphate = dihydroxyacetone phosphate. The protein operates within carbohydrate biosynthesis; gluconeogenesis. Its pathway is carbohydrate degradation; glycolysis; D-glyceraldehyde 3-phosphate from glycerone phosphate: step 1/1. Involved in the gluconeogenesis. Catalyzes stereospecifically the conversion of dihydroxyacetone phosphate (DHAP) to D-glyceraldehyde-3-phosphate (G3P). In Listeria monocytogenes serovar 1/2a (strain ATCC BAA-679 / EGD-e), this protein is Probable triosephosphate isomerase 2.